Reading from the N-terminus, the 211-residue chain is Thiamine-phosphate synthase (211 aa).

4-amino-2-methyl-5-(diphosphooxymethyl)pyrimidine contacts are provided by residues glutamine 37–lysine 41 and asparagine 69. Positions 70 and 89 each coordinate Mg(2+). Residue serine 108 participates in 4-amino-2-methyl-5-(diphosphooxymethyl)pyrimidine binding. Threonine 134–threonine 136 lines the 2-[(2R,5Z)-2-carboxy-4-methylthiazol-5(2H)-ylidene]ethyl phosphate pocket. Lysine 137 contributes to the 4-amino-2-methyl-5-(diphosphooxymethyl)pyrimidine binding site. Residues glycine 166 and valine 186–serine 187 contribute to the 2-[(2R,5Z)-2-carboxy-4-methylthiazol-5(2H)-ylidene]ethyl phosphate site.

This sequence belongs to the thiamine-phosphate synthase family. Requires Mg(2+) as cofactor.

The enzyme catalyses 2-[(2R,5Z)-2-carboxy-4-methylthiazol-5(2H)-ylidene]ethyl phosphate + 4-amino-2-methyl-5-(diphosphooxymethyl)pyrimidine + 2 H(+) = thiamine phosphate + CO2 + diphosphate. The catalysed reaction is 2-(2-carboxy-4-methylthiazol-5-yl)ethyl phosphate + 4-amino-2-methyl-5-(diphosphooxymethyl)pyrimidine + 2 H(+) = thiamine phosphate + CO2 + diphosphate. It catalyses the reaction 4-methyl-5-(2-phosphooxyethyl)-thiazole + 4-amino-2-methyl-5-(diphosphooxymethyl)pyrimidine + H(+) = thiamine phosphate + diphosphate. Its pathway is cofactor biosynthesis; thiamine diphosphate biosynthesis; thiamine phosphate from 4-amino-2-methyl-5-diphosphomethylpyrimidine and 4-methyl-5-(2-phosphoethyl)-thiazole: step 1/1. In terms of biological role, condenses 4-methyl-5-(beta-hydroxyethyl)thiazole monophosphate (THZ-P) and 2-methyl-4-amino-5-hydroxymethyl pyrimidine pyrophosphate (HMP-PP) to form thiamine monophosphate (TMP). The sequence is that of Thiamine-phosphate synthase from Shigella sonnei (strain Ss046).